A 389-amino-acid polypeptide reads, in one-letter code: Cytochrome b (389 aa).

The next 4 helical transmembrane spans lie at 32 to 52, 76 to 98, 113 to 133, and 179 to 199; these read FGSL…FLAM, WLIR…LHIA, TWTI…LGYT, and FFSL…MHMI. 2 residues coordinate heme b: histidine 82 and histidine 96. Heme b contacts are provided by histidine 183 and histidine 197. Histidine 202 contacts a ubiquinone. The next 4 membrane-spanning stretches (helical) occupy residues 225–245, 289–309, 321–341, and 348–368; these read YLIK…IIIF, LFGV…PLLD, IGKL…FIGA, and YVAI…FFIP.

Belongs to the cytochrome b family. As to quaternary structure, fungal cytochrome b-c1 complex contains 10 subunits; 3 respiratory subunits, 2 core proteins and 5 low-molecular weight proteins. Cytochrome b-c1 complex is a homodimer. It depends on heme b as a cofactor.

Its subcellular location is the mitochondrion inner membrane. Component of the ubiquinol-cytochrome c reductase complex (complex III or cytochrome b-c1 complex) that is part of the mitochondrial respiratory chain. The b-c1 complex mediates electron transfer from ubiquinol to cytochrome c. Contributes to the generation of a proton gradient across the mitochondrial membrane that is then used for ATP synthesis. The polypeptide is Cytochrome b (cob) (Schizosaccharomyces japonicus (Fission yeast)).